We begin with the raw amino-acid sequence, 182 residues long: Adenine phosphoribosyltransferase (182 aa).

Ala-133–Ser-137 is an AMP binding site.

The protein belongs to the purine/pyrimidine phosphoribosyltransferase family. In terms of assembly, homodimer. The cofactor is Mg(2+).

It is found in the cytoplasm. It localises to the nucleus. The catalysed reaction is AMP + diphosphate = 5-phospho-alpha-D-ribose 1-diphosphate + adenine. It participates in purine metabolism; AMP biosynthesis via salvage pathway; AMP from adenine: step 1/1. Its function is as follows. Catalyzes a salvage reaction resulting in the formation of AMP, that is energically less costly than de novo synthesis. This chain is Adenine phosphoribosyltransferase (APT1), found in Yarrowia lipolytica (strain CLIB 122 / E 150) (Yeast).